The sequence spans 296 residues: NAD kinase (296 aa).

Catalysis depends on aspartate 72, which acts as the Proton acceptor. NAD(+) contacts are provided by residues 72–73 (DG), 146–147 (ND), arginine 157, lysine 174, aspartate 176, 187–192 (TAYALS), and glutamine 247.

Belongs to the NAD kinase family. The cofactor is a divalent metal cation.

Its subcellular location is the cytoplasm. The catalysed reaction is NAD(+) + ATP = ADP + NADP(+) + H(+). In terms of biological role, involved in the regulation of the intracellular balance of NAD and NADP, and is a key enzyme in the biosynthesis of NADP. Catalyzes specifically the phosphorylation on 2'-hydroxyl of the adenosine moiety of NAD to yield NADP. This is NAD kinase from Pseudomonas syringae pv. tomato (strain ATCC BAA-871 / DC3000).